Consider the following 513-residue polypeptide: GMP synthase [glutamine-hydrolyzing] (513 aa).

The 191-residue stretch at 8-198 (MILVLDFGSQ…VFGVCECEGE (191 aa)) folds into the Glutamine amidotransferase type-1 domain. Catalysis depends on cysteine 85, which acts as the Nucleophile. Catalysis depends on residues histidine 172 and glutamate 174. In terms of domain architecture, GMPS ATP-PPase spans 199-388 (WSMENFIEIE…LGIPDEIVWR (190 aa)). An ATP-binding site is contributed by 227 to 233 (GGVDSSV).

In terms of assembly, homodimer.

The catalysed reaction is XMP + L-glutamine + ATP + H2O = GMP + L-glutamate + AMP + diphosphate + 2 H(+). The protein operates within purine metabolism; GMP biosynthesis; GMP from XMP (L-Gln route): step 1/1. In terms of biological role, catalyzes the synthesis of GMP from XMP. This Bacillus subtilis (strain 168) protein is GMP synthase [glutamine-hydrolyzing] (guaA).